The following is a 589-amino-acid chain: Probable cytochrome P450 49a1 (589 aa).

Residues 56–90 (TGESSNPKKLNVSQQPVTSVATTRTTASSLPAETT) form a disordered region. The span at 57–71 (GESSNPKKLNVSQQP) shows a compositional bias: polar residues. A compositionally biased stretch (low complexity) spans 72–84 (VTSVATTRTTASS). Cys-536 contacts heme.

The protein belongs to the cytochrome P450 family. The cofactor is heme.

It localises to the endoplasmic reticulum membrane. The protein resides in the microsome membrane. May be involved in the metabolism of insect hormones and in the breakdown of synthetic insecticides. This chain is Probable cytochrome P450 49a1 (Cyp49a1), found in Drosophila melanogaster (Fruit fly).